A 284-amino-acid polypeptide reads, in one-letter code: Tropomyosin alpha-1 chain (284 aa).

Residues methionine 1–glutamine 38 are disordered. Positions methionine 1–isoleucine 284 form a coiled coil. A compositionally biased stretch (basic and acidic residues) spans lysine 12 to glutamine 38.

This sequence belongs to the tropomyosin family. In terms of assembly, homodimer. Heterodimer of an alpha (TPM1, TPM3 or TPM4) and a beta (TPM2) chain.

The protein resides in the cytoplasm. The protein localises to the cytoskeleton. In terms of biological role, binds to actin filaments in muscle and non-muscle cells. Plays a central role, in association with the troponin complex, in the calcium dependent regulation of vertebrate striated muscle contraction. Smooth muscle contraction is regulated by interaction with caldesmon. In non-muscle cells is implicated in stabilizing cytoskeleton actin filaments. This chain is Tropomyosin alpha-1 chain (tpm1), found in Xenopus laevis (African clawed frog).